A 451-amino-acid polypeptide reads, in one-letter code: AAA-ATPase At3g50940 (451 aa).

Residues 1 to 25 (MSSSSESHLATAKTALTAVASVAAA) form the signal peptide. ATP is bound at residue 254-261 (GPPGTGKS).

The protein belongs to the AAA ATPase family. BCS1 subfamily. Requires Mg(2+) as cofactor.

The catalysed reaction is ATP + H2O = ADP + phosphate + H(+). The protein is AAA-ATPase At3g50940 of Arabidopsis thaliana (Mouse-ear cress).